Consider the following 557-residue polypeptide: Glutamyl-tRNA(Gln) amidotransferase subunit B, mitochondrial (557 aa).

The transit peptide at 1–41 directs the protein to the mitochondrion; sequence MAAPMLRWGCRGRRWAFARVDGGSCHRRGAPTGSTSNQIRG. Residues 26-45 are disordered; sequence HRRGAPTGSTSNQIRGESSV. The segment covering 32–45 has biased composition (polar residues); that stretch reads TGSTSNQIRGESSV. K529 carries the post-translational modification N6-succinyllysine.

This sequence belongs to the GatB/GatE family. GatB subfamily. In terms of assembly, subunit of the heterotrimeric GatCAB amidotransferase (AdT) complex, composed of A (QRSL1), B (GATB) and C (GATC) subunits. As to expression, predominantly expressed in tissues characterized by high rates of oxidative phosphorylation (OxPhos), including muscle and heart.

The protein resides in the mitochondrion. It carries out the reaction L-glutamyl-tRNA(Gln) + L-glutamine + ATP + H2O = L-glutaminyl-tRNA(Gln) + L-glutamate + ADP + phosphate + H(+). Functionally, allows the formation of correctly charged Gln-tRNA(Gln) through the transamidation of misacylated Glu-tRNA(Gln) in the mitochondria. The reaction takes place in the presence of glutamine and ATP through an activated gamma-phospho-Glu-tRNA(Gln). This Homo sapiens (Human) protein is Glutamyl-tRNA(Gln) amidotransferase subunit B, mitochondrial.